The primary structure comprises 72 residues: General transcription factor IIH subunit 5 (72 aa).

The protein belongs to the TFB5 family. In terms of assembly, component of the 7-subunit TFIIH core complex composed of XPB/repB, XPD/repD, gtf2h1, gtf2h2, gtf2h3, gtf2h4 and gtf2h5, which is active in NER. The core complex associates with the 3-subunit CDK-activating kinase (CAK) module composed of cycH/cyclin H, cdk7 and mnat1 to form the 10-subunit holoenzyme (holo-TFIIH) active in transcription.

Its subcellular location is the nucleus. In terms of biological role, component of the general transcription and DNA repair factor IIH (TFIIH) core complex, which is involved in general and transcription-coupled nucleotide excision repair (NER) of damaged DNA and, when complexed to CAK, in RNA transcription by RNA polymerase II. In NER, TFIIH acts by opening DNA around the lesion to allow the excision of the damaged oligonucleotide and its replacement by a new DNA fragment. In transcription, TFIIH has an essential role in transcription initiation. When the pre-initiation complex (PIC) has been established, TFIIH is required for promoter opening and promoter escape. Phosphorylation of the C-terminal tail (CTD) of the largest subunit of RNA polymerase II by the kinase module CAK controls the initiation of transcription. In Dictyostelium discoideum (Social amoeba), this protein is General transcription factor IIH subunit 5 (gtf2h5).